The following is a 411-amino-acid chain: Peptidyl-prolyl cis-trans isomerase (411 aa).

S2 carries the N-acetylserine modification. 2 disordered regions span residues 54–127 and 160–302; these read IIKR…TLSP and NYVK…PKSK. Positions 61–87 are enriched in acidic residues; the sequence is FEDDDFLGGDFDEDEIDEESSEEEEEE. Residues S80 and S81 each carry the phosphoserine modification. Phosphothreonine is present on T89. 2 stretches are compositionally biased toward acidic residues: residues 103-118 and 173-242; these read ESED…DEFQ and EGED…EEQK. Residue Y184 is modified to Phosphotyrosine; by CK2. Residue S186 is modified to Phosphoserine; by CK2. A compositionally biased stretch (basic residues) spans 251-260; the sequence is KSKKEKKRKH. Positions 256 to 271 match the Nuclear localization signal motif; sequence KKRKHEEKEEEKKAKK. Positions 261 to 296 are enriched in basic and acidic residues; sequence EEKEEEKKAKKVKKVEFKKDLEEGPTKPKSKKEQDK. The region spanning 324–411 is the PPIase FKBP-type domain; the sequence is GARVGMRYIG…FDVKLVSMKN (88 aa).

Belongs to the FKBP-type PPIase family. FKBP3/4 subfamily. In terms of assembly, interacts with NOP53. In terms of processing, phosphorylated at tyrosine and dephosphorylated by the phosphotyrosine-specific phosphoprotein phosphatase PTP1.

It localises to the nucleus. The protein resides in the nucleolus. The catalysed reaction is [protein]-peptidylproline (omega=180) = [protein]-peptidylproline (omega=0). With respect to regulation, inhibited by both FK506 and rapamycin. In terms of biological role, proline isomerase that belongs to an abundant class of enzymes that catalyze the cis-trans isomerization of X-Pro peptide bonds and can accelerate the refolding of proline-containing polypeptides. Specifically binds nuclear localization sequences. May be involved in the assembly or folding of ribosomal proteins. The sequence is that of Peptidyl-prolyl cis-trans isomerase from Saccharomyces cerevisiae (strain ATCC 204508 / S288c) (Baker's yeast).